A 454-amino-acid chain; its full sequence is Probable 1,4-beta-D-glucan cellobiohydrolase C (454 aa).

Positions 1–19 are cleaved as a signal peptide; that stretch reads MKHLASSIALTLLLPAVQA. A CBM1 domain is found at 20 to 55; that stretch reads QQTVWGQCGGQGWSGPTSCVAGAACSTLNPYYAQCI. Cystine bridges form between cysteine 27–cysteine 44 and cysteine 38–cysteine 54. 2 thr-rich linker regions span residues 59–94 and 95–454; these read TATSTTLTTTTAATTTSQTTTKPTTTGPTTSAPTVT and ASGN…NPSF. Residues 68–95 are disordered; the sequence is TTAATTTSQTTTKPTTTGPTTSAPTVTA. The active site involves aspartate 184. Cystine bridges form between cysteine 185/cysteine 244 and cysteine 376/cysteine 423. Aspartate 230 functions as the Proton donor in the catalytic mechanism. The active-site Nucleophile is aspartate 409. The N-linked (GlcNAc...) asparagine glycan is linked to asparagine 413.

The protein belongs to the glycosyl hydrolase 6 (cellulase B) family.

It localises to the secreted. It carries out the reaction Hydrolysis of (1-&gt;4)-beta-D-glucosidic linkages in cellulose and cellotetraose, releasing cellobiose from the non-reducing ends of the chains.. Functionally, the biological conversion of cellulose to glucose generally requires three types of hydrolytic enzymes: (1) Endoglucanases which cut internal beta-1,4-glucosidic bonds; (2) Exocellobiohydrolases that cut the disaccharide cellobiose from the non-reducing end of the cellulose polymer chain; (3) Beta-1,4-glucosidases which hydrolyze the cellobiose and other short cello-oligosaccharides to glucose. The protein is Probable 1,4-beta-D-glucan cellobiohydrolase C (cbhC) of Aspergillus fumigatus (strain CBS 144.89 / FGSC A1163 / CEA10) (Neosartorya fumigata).